The sequence spans 147 residues: UPF0310 protein in gntR 5'region (147 aa).

Belongs to the UPF0310 family.

This Bacillus licheniformis protein is UPF0310 protein in gntR 5'region (oug).